Consider the following 472-residue polypeptide: Aspartyl/glutamyl-tRNA(Asn/Gln) amidotransferase subunit B (472 aa).

This sequence belongs to the GatB/GatE family. GatB subfamily. As to quaternary structure, heterotrimer of A, B and C subunits.

It carries out the reaction L-glutamyl-tRNA(Gln) + L-glutamine + ATP + H2O = L-glutaminyl-tRNA(Gln) + L-glutamate + ADP + phosphate + H(+). It catalyses the reaction L-aspartyl-tRNA(Asn) + L-glutamine + ATP + H2O = L-asparaginyl-tRNA(Asn) + L-glutamate + ADP + phosphate + 2 H(+). Functionally, allows the formation of correctly charged Asn-tRNA(Asn) or Gln-tRNA(Gln) through the transamidation of misacylated Asp-tRNA(Asn) or Glu-tRNA(Gln) in organisms which lack either or both of asparaginyl-tRNA or glutaminyl-tRNA synthetases. The reaction takes place in the presence of glutamine and ATP through an activated phospho-Asp-tRNA(Asn) or phospho-Glu-tRNA(Gln). In Elusimicrobium minutum (strain Pei191), this protein is Aspartyl/glutamyl-tRNA(Asn/Gln) amidotransferase subunit B.